Here is a 535-residue protein sequence, read N- to C-terminus: Beta-glucosidase 20 (535 aa).

The N-terminal stretch at 1 to 24 (MGRFHKFPLLGLVLFLGLTGSLIA) is a signal peptide. Glutamine 56 and histidine 159 together coordinate a beta-D-glucoside. A glycan (N-linked (GlcNAc...) asparagine) is linked at asparagine 187. 204–205 (NE) is an a beta-D-glucoside binding site. Glutamate 205 acts as the Proton donor in catalysis. Cysteines 224 and 235 form a disulfide. Positions 351 and 424 each coordinate a beta-D-glucoside. The Nucleophile role is filled by glutamate 424. A glycan (N-linked (GlcNAc...) asparagine) is linked at asparagine 468. A beta-D-glucoside contacts are provided by residues tryptophan 475, 482-483 (EW), and phenylalanine 491. The N-linked (GlcNAc...) asparagine glycan is linked to asparagine 501. A Prevents secretion from ER motif is present at residues 532–535 (HDEL).

The protein belongs to the glycosyl hydrolase 1 family.

Its subcellular location is the endoplasmic reticulum lumen. It catalyses the reaction Hydrolysis of terminal, non-reducing beta-D-glucosyl residues with release of beta-D-glucose.. The polypeptide is Beta-glucosidase 20 (Arabidopsis thaliana (Mouse-ear cress)).